The chain runs to 350 residues: Derriere protein (350 aa).

Residues 1-16 (MLSLACFFSFLLMVKS) form the signal peptide. The propeptide occupies 17 to 236 (SPLTFQERML…SSCKTPRAKR (220 aa)). 2 N-linked (GlcNAc...) asparagine glycosylation sites follow: Asn171 and Asn202. 3 disulfide bridges follow: Cys249–Cys315, Cys278–Cys347, and Cys282–Cys349.

It belongs to the TGF-beta family. Homodimer; disulfide-linked. Also forms heterodimers with other TGF-beta family members including nodal2/nr-2 and bmp4.

Its subcellular location is the secreted. In terms of biological role, required for posterior mesoderm formation during embryogenesis. Acts indirectly to suppress head formation by altering mesodermal patterning. Also involved in the establishment of left-right axis asymmetry, acting upstream of nodal/nr-1. Can exert long-range effects in the embryo. This is Derriere protein from Xenopus tropicalis (Western clawed frog).